A 79-amino-acid polypeptide reads, in one-letter code: Translational regulator CsrA (79 aa).

The protein belongs to the CsrA/RsmA family. As to quaternary structure, homodimer; the beta-strands of each monomer intercalate to form a hydrophobic core, while the alpha-helices form wings that extend away from the core.

It is found in the cytoplasm. Its function is as follows. A translational regulator that binds mRNA to regulate translation initiation and/or mRNA stability. Usually binds in the 5'-UTR at or near the Shine-Dalgarno sequence preventing ribosome-binding, thus repressing translation. Its main target seems to be the major flagellin gene, while its function is anatagonized by FliW. The polypeptide is Translational regulator CsrA (Leptospira biflexa serovar Patoc (strain Patoc 1 / Ames)).